The sequence spans 81 residues: Photosystem I iron-sulfur center (81 aa).

2 consecutive 4Fe-4S ferredoxin-type domains span residues 2-31 (SHKI…MIPW) and 39-68 (IASA…VRVY). Positions 11, 14, 17, 21, 48, 51, 54, and 58 each coordinate [4Fe-4S] cluster.

In terms of assembly, the eukaryotic PSI reaction center is composed of at least 11 subunits. Requires [4Fe-4S] cluster as cofactor.

It is found in the plastid. Its subcellular location is the chloroplast thylakoid membrane. It catalyses the reaction reduced [plastocyanin] + hnu + oxidized [2Fe-2S]-[ferredoxin] = oxidized [plastocyanin] + reduced [2Fe-2S]-[ferredoxin]. In terms of biological role, apoprotein for the two 4Fe-4S centers FA and FB of photosystem I (PSI); essential for photochemical activity. FB is the terminal electron acceptor of PSI, donating electrons to ferredoxin. The C-terminus interacts with PsaA/B/D and helps assemble the protein into the PSI complex. Required for binding of PsaD and PsaE to PSI. PSI is a plastocyanin-ferredoxin oxidoreductase, converting photonic excitation into a charge separation, which transfers an electron from the donor P700 chlorophyll pair to the spectroscopically characterized acceptors A0, A1, FX, FA and FB in turn. The chain is Photosystem I iron-sulfur center from Chara vulgaris (Common stonewort).